Reading from the N-terminus, the 147-residue chain is Small ribosomal subunit protein uS5 (147 aa).

Positions 9–72 (FEEVIVDIGR…DDAFKNIVEV (64 aa)) constitute an S5 DRBM domain.

The protein belongs to the universal ribosomal protein uS5 family. In terms of assembly, part of the 30S ribosomal subunit. Contacts proteins S4 and S8.

With S4 and S12 plays an important role in translational accuracy. Functionally, located at the back of the 30S subunit body where it stabilizes the conformation of the head with respect to the body. This is Small ribosomal subunit protein uS5 from Campylobacter fetus subsp. fetus (strain 82-40).